The primary structure comprises 358 residues: Ubiquitin thioesterase OTU1 (358 aa).

Positions 5-87 (FSVKLKSKKG…LIVEEKAGAA (83 aa)) constitute a Ubiquitin-like domain. Positions 8 to 94 (KLKSKKGQFI…GAAGPTSTPL (87 aa)) are UBX-like. Residues 83-108 (KAGAAGPTSTPLASGSGSSTMEDDEA) form a disordered region. Polar residues predominate over residues 89-102 (PTSTPLASGSGSST). The 125-residue stretch at 161–285 (LLKKVVPADN…GIHYDPLYME (125 aa)) folds into the OTU domain. The interval 166–172 (VPADNSC) is cys-loop. The active site involves aspartate 169. Cysteine 172 serves as the catalytic Nucleophile. Positions 224–234 (IQKADSWGGAI) are variable-loop. The segment at 274 to 278 (FDGIH) is his-loop. Isoleucine 277 is a substrate binding site. Histidine 278 is a catalytic residue. The interval 301–306 (MGVYQQ) is S2 site. A C2H2-type zinc finger spans residues 328 to 352 (LRCMDCDVMLVGQGQAQEHAKKTGH). The active site involves histidine 352.

It carries out the reaction Thiol-dependent hydrolysis of ester, thioester, amide, peptide and isopeptide bonds formed by the C-terminal Gly of ubiquitin (a 76-residue protein attached to proteins as an intracellular targeting signal).. Its function is as follows. Hydrolase that can remove conjugated ubiquitin from proteins and may therefore play an important regulatory role at the level of protein turnover by preventing degradation. The sequence is that of Ubiquitin thioesterase OTU1 from Drosophila pseudoobscura pseudoobscura (Fruit fly).